A 104-amino-acid polypeptide reads, in one-letter code: L-rhamnose mutarotase (104 aa).

Residue Tyr18 participates in substrate binding. His22 serves as the catalytic Proton donor. Substrate contacts are provided by residues Tyr41 and 76–77; that span reads WW.

Belongs to the rhamnose mutarotase family. In terms of assembly, homodimer.

The protein resides in the cytoplasm. The enzyme catalyses alpha-L-rhamnose = beta-L-rhamnose. It functions in the pathway carbohydrate metabolism; L-rhamnose metabolism. Functionally, involved in the anomeric conversion of L-rhamnose. The chain is L-rhamnose mutarotase from Escherichia coli O127:H6 (strain E2348/69 / EPEC).